We begin with the raw amino-acid sequence, 409 residues long: Phosphatidylserine decarboxylase proenzyme, mitochondrial (409 aa).

The N-terminal 52 residues, 1-52 (MAASVCRPYVRSLPGVMPWRSSSCHYEYTAMHHFLGSFQKLPFEPFNTGARK), are a transit peptide targeting the mitochondrion. Over 53–63 (IHTAPVRSLFL) the chain is Mitochondrial matrix. A helical membrane pass occupies residues 64-82 (LRPVPILLATGGGYAGYRQ). Topologically, residues 83 to 409 (YEKYRDQKLE…IRFGEALGSL (327 aa)) are mitochondrial intermembrane. Residues aspartate 191, histidine 267, and serine 378 each act as charge relay system; for autoendoproteolytic cleavage activity in the active site. Serine 378 serves as the catalytic Schiff-base intermediate with substrate; via pyruvic acid; for decarboxylase activity. Serine 378 carries the pyruvic acid (Ser); by autocatalysis modification.

It belongs to the phosphatidylserine decarboxylase family. PSD-B subfamily. Eukaryotic type I sub-subfamily. In terms of assembly, heterodimer of a large membrane-associated beta subunit and a small pyruvoyl-containing alpha subunit. Requires pyruvate as cofactor. Is synthesized initially as an inactive proenzyme. Formation of the active enzyme involves a self-maturation process in which the active site pyruvoyl group is generated from an internal serine residue via an autocatalytic post-translational modification. Two non-identical subunits are generated from the proenzyme in this reaction, and the pyruvate is formed at the N-terminus of the alpha chain, which is derived from the carboxyl end of the proenzyme. The autoendoproteolytic cleavage occurs by a canonical serine protease mechanism, in which the side chain hydroxyl group of the serine supplies its oxygen atom to form the C-terminus of the beta chain, while the remainder of the serine residue undergoes an oxidative deamination to produce ammonia and the pyruvoyl prosthetic group on the alpha chain. During this reaction, the Ser that is part of the protease active site of the proenzyme becomes the pyruvoyl prosthetic group, which constitutes an essential element of the active site of the mature decarboxylase.

It is found in the mitochondrion inner membrane. The protein localises to the cytoplasm. The protein resides in the lipid droplet. The enzyme catalyses a 1,2-diacyl-sn-glycero-3-phospho-L-serine + H(+) = a 1,2-diacyl-sn-glycero-3-phosphoethanolamine + CO2. It participates in phospholipid metabolism; phosphatidylethanolamine biosynthesis. Catalyzes the formation of phosphatidylethanolamine (PtdEtn) from phosphatidylserine (PtdSer). Plays a central role in phospholipid metabolism and in the interorganelle trafficking of phosphatidylserine. May be involved in lipid droplet biogenesis at the endoplasmic reticulum membrane. The chain is Phosphatidylserine decarboxylase proenzyme, mitochondrial from Cricetulus griseus (Chinese hamster).